We begin with the raw amino-acid sequence, 294 residues long: ATP synthase gamma chain (294 aa).

This sequence belongs to the ATPase gamma chain family. In terms of assembly, F-type ATPases have 2 components, CF(1) - the catalytic core - and CF(0) - the membrane proton channel. CF(1) has five subunits: alpha(3), beta(3), gamma(1), delta(1), epsilon(1). CF(0) has three main subunits: a, b and c.

The protein localises to the cell inner membrane. Its function is as follows. Produces ATP from ADP in the presence of a proton gradient across the membrane. The gamma chain is believed to be important in regulating ATPase activity and the flow of protons through the CF(0) complex. This is ATP synthase gamma chain from Campylobacter lari (strain RM2100 / D67 / ATCC BAA-1060).